The following is a 475-amino-acid chain: Kynureninase (475 aa).

Pyridoxal 5'-phosphate-binding positions include leucine 141, threonine 142, 169-172 (FPSD), aspartate 254, histidine 257, and tyrosine 279. An N6-(pyridoxal phosphate)lysine modification is found at lysine 280. Pyridoxal 5'-phosphate is bound by residues tryptophan 319 and asparagine 347.

Belongs to the kynureninase family. Homodimer. Pyridoxal 5'-phosphate serves as cofactor.

The protein localises to the cytoplasm. It catalyses the reaction L-kynurenine + H2O = anthranilate + L-alanine + H(+). The catalysed reaction is 3-hydroxy-L-kynurenine + H2O = 3-hydroxyanthranilate + L-alanine + H(+). The protein operates within amino-acid degradation; L-kynurenine degradation; L-alanine and anthranilate from L-kynurenine: step 1/1. It functions in the pathway cofactor biosynthesis; NAD(+) biosynthesis; quinolinate from L-kynurenine: step 2/3. In terms of biological role, catalyzes the cleavage of L-kynurenine (L-Kyn) and L-3-hydroxykynurenine (L-3OHKyn) into anthranilic acid (AA) and 3-hydroxyanthranilic acid (3-OHAA), respectively. The sequence is that of Kynureninase (bna5) from Sclerotinia sclerotiorum (strain ATCC 18683 / 1980 / Ss-1) (White mold).